Reading from the N-terminus, the 164-residue chain is uncharacterized protein (164 aa).

Residues 28-157 enclose the HTH marR-type domain; sequence EAEILYQLQG…LIDVLARMRN (130 aa). The segment at residues 71 to 94 is a DNA-binding region (H-T-H motif); that stretch reads QSDLQKKVNIDSAAVTRHLKQLES.

This is an uncharacterized protein from Bacillus subtilis (strain 168).